Reading from the N-terminus, the 352-residue chain is Phosphoribosylformylglycinamidine cyclo-ligase (352 aa).

The protein belongs to the AIR synthase family.

It localises to the cytoplasm. It catalyses the reaction 2-formamido-N(1)-(5-O-phospho-beta-D-ribosyl)acetamidine + ATP = 5-amino-1-(5-phospho-beta-D-ribosyl)imidazole + ADP + phosphate + H(+). Its pathway is purine metabolism; IMP biosynthesis via de novo pathway; 5-amino-1-(5-phospho-D-ribosyl)imidazole from N(2)-formyl-N(1)-(5-phospho-D-ribosyl)glycinamide: step 2/2. The polypeptide is Phosphoribosylformylglycinamidine cyclo-ligase (Stenotrophomonas maltophilia (strain K279a)).